A 591-amino-acid chain; its full sequence is Glutathione hydrolase (591 aa).

Residues 1-41 (MASKWIEEQPLVHRRDIRISSKSRIAAGLLVLLVLWRYGLP) form the signal peptide. Arginine 122 is an L-glutamate binding site. 3 N-linked (GlcNAc...) asparagine glycosylation sites follow: asparagine 135, asparagine 270, and asparagine 389. Residue threonine 393 is the Nucleophile of the active site. L-glutamate is bound by residues threonine 411, glutamate 432, and 464–465 (SA). N-linked (GlcNAc...) asparagine glycosylation occurs at asparagine 534.

The protein belongs to the gamma-glutamyltransferase family.

It carries out the reaction an N-terminal (5-L-glutamyl)-[peptide] + an alpha-amino acid = 5-L-glutamyl amino acid + an N-terminal L-alpha-aminoacyl-[peptide]. The catalysed reaction is glutathione + H2O = L-cysteinylglycine + L-glutamate. It catalyses the reaction an S-substituted glutathione + H2O = an S-substituted L-cysteinylglycine + L-glutamate. It functions in the pathway mycotoxin biosynthesis. Functionally, gamma-glutamyltransferase; part of the gene cluster that mediates the biosynthesis of the secondary metabolite ustiloxin B, an antimitotic tetrapeptide. First, ustA is processed by the subtilisin-like endoprotease Kex2 that is outside the ustiloxin B gene cluster, at the C-terminal side of Arg-Lys, after transfer to Golgi apparatus through the endoplasmic reticulum (ER). Cleavage by KEX2 generates 16 peptides YAIG-I to YAIG-XVI. To process the precursor peptide further, at least two peptidases are necessary to cleave the N-terminal and C-terminal sides of the Tyr-Ala-Ile-Gly core peptide which serves as backbone for the synthesis of ustiloxin B, through cyclization and modification of the tyrosine with a non-protein coding amino acid, norvaline. One of the two peptidases must be the serine peptidase ustP; and the other pepdidase is probably ustH. Macrocyclization of the core peptide derived from ustA requires the tyrosinase ustQ, as well as the homologous oxidases ustYa and ustYb, and leads to the production of the first cyclization product N-desmethylustiloxin F. For the formation of N-desmethylustiloxin F, three oxidation steps are required, hydroxylation at the benzylic position, hydroxylation at either the aromatic ring of Tyr or beta-position of Ile, and oxidative cyclization. UstQ may catalyze the oxidation of a phenol moiety, whereas the ustYa and ustYb are most likely responsible for the remaining two-step oxidations. N-desmethylustiloxin F is then methylated by ustM to yield ustiloxin F which in turn substrate of the cytochrome P450 monooxygenase ustC which catalyzes the formation of S-deoxyustiloxin H. The flavoprotein monooxygenases ustF1 and ustF2 then participate in the modification of the side chain of S-deoxyustiloxin H, leading to the synthesis of an oxime intermediate, via ustiloxin H. Finally, carboxylative dehydration performed by the cysteine desulfurase-like protein ustD yields ustiloxin B. The protein is Glutathione hydrolase of Aspergillus flavus (strain ATCC 200026 / FGSC A1120 / IAM 13836 / NRRL 3357 / JCM 12722 / SRRC 167).